The following is a 206-amino-acid chain: Large ribosomal subunit protein uL13z (206 aa).

Belongs to the universal ribosomal protein uL13 family.

This Arabidopsis thaliana (Mouse-ear cress) protein is Large ribosomal subunit protein uL13z (RPL13AA).